A 442-amino-acid polypeptide reads, in one-letter code: MRGNFMSSIEKLGGLKQRLTITVPAEEVDKAYKSRLLKVARTAKIPKFRPGKASPAVVEKLYGKAILQEVGSELIQSSLREAVEEHQLQVAGAPDIKMDKILRGEPFKYVVNFEVYPEITLESLAGETIERTQVEITEEDLDKMLEALRKQYAEWKEVDRPAKADDRVIIDFEGTLDGKPFERGSAKDFQLELGSKRMIAGFEEGIEGMKPGESKALDITFPADYPSEDLAGKAAVFNITLQKVMAPELPVLDEQFAERLGIKEGGLEALRQKVRTNMEKEVHHHMENKLKMAVLDKLIERNPIEVPESLIEAEIDHLQQMTRQQVAMQTHKPDEAKKMELPRDPYREQATKRVKLGLLLAEVVKQHKIKADPEQLRARVEEVAASYQDPEKVISWYYSNKQMLSEIESVVLEDQAVAQLMSELEVKDQAIPYEEAVKQIQQ.

Residues 165–250 (DDRVIIDFEG…LQKVMAPELP (86 aa)) enclose the PPIase FKBP-type domain.

This sequence belongs to the FKBP-type PPIase family. Tig subfamily.

The protein localises to the cytoplasm. It carries out the reaction [protein]-peptidylproline (omega=180) = [protein]-peptidylproline (omega=0). Involved in protein export. Acts as a chaperone by maintaining the newly synthesized protein in an open conformation. Functions as a peptidyl-prolyl cis-trans isomerase. The protein is Trigger factor of Coxiella burnetii (strain CbuG_Q212) (Coxiella burnetii (strain Q212)).